The sequence spans 211 residues: Large ribosomal subunit protein eL13 (211 aa).

Belongs to the eukaryotic ribosomal protein eL13 family. As to quaternary structure, component of the 60S large ribosomal subunit (LSU).

Its subcellular location is the cytoplasm. Component of the ribosome, a large ribonucleoprotein complex responsible for the synthesis of proteins in the cell. The small ribosomal subunit (SSU) binds messenger RNAs (mRNAs) and translates the encoded message by selecting cognate aminoacyl-transfer RNA (tRNA) molecules. The large subunit (LSU) contains the ribosomal catalytic site termed the peptidyl transferase center (PTC), which catalyzes the formation of peptide bonds, thereby polymerizing the amino acids delivered by tRNAs into a polypeptide chain. The nascent polypeptides leave the ribosome through a tunnel in the LSU and interact with protein factors that function in enzymatic processing, targeting, and the membrane insertion of nascent chains at the exit of the ribosomal tunnel. As part of the LSU, it is probably required for its formation and the maturation of rRNAs. This is Large ribosomal subunit protein eL13 (RPL13) from Gallus gallus (Chicken).